Consider the following 281-residue polypeptide: MAKTRTSSLRNRRQLKTAVAATADDDKDGIFMVLLSCFKIFVCFAIVLITAVAWGLIMVLLLPWPYMRIRLGNLYGHIIGGLVIWLYGIPIEIQGSEHTKKRAIYISNHASPIDAFFVMWLAPIGTVGVAKKEVIWYPLLGQLYTLAHHIRIDRSNPAAAIQSMKEAVRVITEKNLSLIMFPEGTRSGDGRLLPFKKGFVHLALQSHLPIVPMILTGTHLAWRKGTFRVRPVPITVKYLPPINTDDWTVDKIDDYVKMIHDIYVRNLPASQKPLGSTNRSK.

3 consecutive transmembrane segments (helical) span residues 40–60 (IFVCFAIVLITAVAWGLIMVL), 71–91 (LGNLYGHIIGGLVIWLYGIPI), and 110–130 (ASPIDAFFVMWLAPIGTVGVA). The HXXXXD motif motif lies at 109-114 (HASPID).

This sequence belongs to the 1-acyl-sn-glycerol-3-phosphate acyltransferase family.

It localises to the membrane. It catalyses the reaction a 1-acyl-sn-glycero-3-phosphate + an acyl-CoA = a 1,2-diacyl-sn-glycero-3-phosphate + CoA. It participates in phospholipid metabolism; CDP-diacylglycerol biosynthesis; CDP-diacylglycerol from sn-glycerol 3-phosphate: step 2/3. In terms of biological role, converts lysophosphatidic acid (LPA) into phosphatidic acid by incorporating acyl moiety at the 2 position. This enzyme uses erucoyl-CoA as an acyl donor. This Limnanthes alba (White meadowfoam) protein is 1-acyl-sn-glycerol-3-phosphate acyltransferase.